We begin with the raw amino-acid sequence, 1876 residues long: Phenolphthiocerol/phthiocerol polyketide synthase subunit A (1876 aa).

An N-acetylthreonine modification is found at Thr2. A Carrier 1 domain is found at 9 to 83; it reads ADLRHWLIDY…ALAAYLAAPE (75 aa). Ser43 bears the O-(pantetheine 4'-phosphoryl)serine mark. The 426-residue stretch at 101 to 526 folds into the Ketosynthase family 3 (KS3) domain; it reads DEPIAVVGMG…GTNAHVVIEQ (426 aa). Active-site for beta-ketoacyl synthase activity residues include Cys273, His408, and His448. The segment at 626–950 is acyltransferase; that stretch reads SPGPGTVFVY…NLNKAHTIHP (325 aa). The active-site For malonyltransferase activity is Ser720. The tract at residues 997 to 1112 is N-terminal hotdog fold; that stretch reads HTTVATVSAS…AQLSSSPSDS (116 aa). The PKS/mFAS DH domain maps to 997-1267; sequence HTTVATVSAS…YRALDFGLDV (271 aa). His1027 serves as the catalytic Proton acceptor; for dehydratase activity. Residues 1102–1130 are disordered; that stretch reads TAQLSSSPSDSASSLNEHHRANGQPPERA. The span at 1106 to 1115 shows a compositional bias: low complexity; that stretch reads SSSPSDSASS. Residues 1130 to 1267 form a C-terminal hotdog fold region; the sequence is AHRDLIPDLA…YRALDFGLDV (138 aa). The active-site Proton donor; for dehydratase activity is Asp1186. 1491–1551 serves as a coordination point for NADP(+); the sequence is AAYLITGGLG…RRRIDAIRAL (61 aa). A beta-ketoacyl reductase region spans residues 1491–1728; the sequence is AAYLITGGLG…DGYDVAQAVV (238 aa). One can recognise a Carrier 2 domain in the interval 1759–1836; the sequence is EVRSELEQGL…SLASYLAKRV (78 aa). The residue at position 1796 (Ser1796) is an O-(pantetheine 4'-phosphoryl)serine.

NADP(+) serves as cofactor. Requires pantetheine 4'-phosphate as cofactor.

The enzyme catalyses icosanoyl-[(phenol)carboxyphthiodiolenone synthase] + 2 (S)-methylmalonyl-CoA + 3 malonyl-CoA + 5 NADPH + 10 H(+) = C32-carboxyphthiodiolenone-[(phenol)carboxyphthiodiolenone synthase] + 5 CO2 + 5 NADP(+) + 5 CoA + 2 H2O. The catalysed reaction is docosanoyl-[(phenol)carboxyphthiodiolenone synthase] + 2 (S)-methylmalonyl-CoA + 3 malonyl-CoA + 5 NADPH + 10 H(+) = C34-carboxyphthiodiolenone-[(phenol)carboxyphthiodiolenone synthase] + 5 CO2 + 5 NADP(+) + 5 CoA + 2 H2O. It carries out the reaction 17-(4-hydroxyphenyl)heptadecanoyl-[(phenol)carboxyphthiodiolenone synthase] + 2 (S)-methylmalonyl-CoA + 3 malonyl-CoA + 5 NADPH + 10 H(+) = C35-(phenol)carboxyphthiodiolenone-[(phenol)carboxyphthiodiolenone synthase] + 5 CO2 + 5 NADP(+) + 5 CoA + 2 H2O. It catalyses the reaction 19-(4-hydroxyphenyl)nonadecanoyl-[(phenol)carboxyphthiodiolenone synthase] + 2 (S)-methylmalonyl-CoA + 3 malonyl-CoA + 5 NADPH + 10 H(+) = C37-(phenol)carboxyphthiodiolenone-[(phenol)carboxyphthiodiolenone synthase] + 5 CO2 + 5 NADP(+) + 5 CoA + 2 H2O. It participates in lipid metabolism; fatty acid biosynthesis. Its function is as follows. Part of the PpsABCDE complex involved in the biosynthesis of the lipid core common to phthiocerols and phenolphthiocerols by successive additions of malonyl-CoA or methylmalonyl-CoA extender units. PpsA can accept as substrate the activated forms of either icosanoyl (C20), docosanoyl (C22) or lignoceroyl (C24) groups from FadD26, or a (4-hydroxyphenyl)-C17 or (4-hydroxyphenyl)-C19 fatty acyl from FadD29. PpsA initiates the biosynthesis and extends its substrate using a malonyl-CoA extender unit. The PpsB and PpsC proteins add the second and third malonyl-CoA extender units. PpsD adds an (R)-methylmalonyl unit and PpsE adds a second (R)-methylmalonyl unit. The incorporation of the methylmalonyl units results in formation of two branched methyl groups in the elongated product. In Mycobacterium tuberculosis (strain ATCC 25618 / H37Rv), this protein is Phenolphthiocerol/phthiocerol polyketide synthase subunit A (ppsA).